The following is a 237-amino-acid chain: Lectin alpha chain (237 aa).

Residues glutamate 8 and aspartate 10 each coordinate Mn(2+). The Ca(2+) site is built by aspartate 10, tyrosine 12, asparagine 14, and aspartate 19. Residue tyrosine 12 participates in a carbohydrate binding. Aspartate 19, histidine 24, and serine 34 together coordinate Mn(2+). 99–100 (LY) serves as a coordination point for a carbohydrate. Aspartate 208 lines the Ca(2+) pocket. Arginine 228 is a binding site for a carbohydrate.

Belongs to the leguminous lectin family. In terms of assembly, equilibrium between homodimer and homotetramer. Oligomerization is pH-dependent with homotetramers forming at pH 6.5 and above. In terms of processing, the beta and gamma chains are produced by partial proteolytic processing of the lectin alpha chain by an asparaginyl endopeptidase. Mixture of 60% alpha lectin and 40% of its beta and gamma proteolytic fragments.

In terms of biological role, D-mannose/D-glucose-binding lectin. Has anti-inflammatory activity in rats. Induces histamine release in mast cells from rat. Induces lymphocyte proliferation and IFNG production. This Dioclea guianensis protein is Lectin alpha chain.